A 465-amino-acid chain; its full sequence is ATP-sulfurylase 3, chloroplastic (465 aa).

A chloroplast-targeting transit peptide spans 1–49; the sequence is MASMSTVFPKPTSFISQPLTKSHKSDSVTTSISFPSNSKTRSLRTISVR.

This sequence belongs to the sulfate adenylyltransferase family. As to quaternary structure, homotetramer.

It localises to the plastid. Its subcellular location is the chloroplast stroma. The catalysed reaction is sulfate + ATP + H(+) = adenosine 5'-phosphosulfate + diphosphate. It participates in sulfur metabolism; hydrogen sulfide biosynthesis; sulfite from sulfate: step 1/3. The sequence is that of ATP-sulfurylase 3, chloroplastic (APS3) from Arabidopsis thaliana (Mouse-ear cress).